We begin with the raw amino-acid sequence, 550 residues long: MFCVQCEQTIRTPAGNGCSYAQGMCGKTAETSDLQDLLIAALQGLSAWAVKAREYGIINHDVDSFAPRAFFSTLTNVNFDSPRIVGYAREAIALREALKAQCLAVDANARVDNPMADLQLVSDDLGELQRQAAEFTPNKDKAAIGENILGLRLLCLYGLKGAAAYMEHAHVLGQYDNDIYAQYHKIMAWLGTWPADMNALLECSMEIGQMNFKVMSILDAGETGKYGHPTPTQVNVKATAGKCILISGHDLKDLYNLLEQTEGTGVNVYTHGEMLPAHGYPELRKFKHLVGNYGSGWQNQQVEFARFPGPIVMTSNCIIDPTVGAYDDRIWTRSIVGWPGVRHLDGEDFSAVIAQAQQMAGFPYSEIPHLITVGFGRQTLLGAADTLIDLVSREKLRHIFLLGGCDGARGERHYFTDFATSVPDDCLILTLACGKYRFNKLEFGDIEGLPRLVDAGQCNDAYSAIILAVTLAEKLGCGVNDLPLSLVLSWFEQKAIVILLTLLSLGVKNIVTGPTAPGFLTPDLLAVLNEKFGLRSITTVEEDMKQLLSA.

[2Fe-2S] cluster is bound by residues C3, C6, C18, and C25. Residues H249, E273, C317, C405, C433, C458, E492, and K494 each coordinate hybrid [4Fe-2O-2S] cluster. C405 is subject to Cysteine persulfide.

Belongs to the HCP family. [2Fe-2S] cluster serves as cofactor. The cofactor is hybrid [4Fe-2O-2S] cluster.

The protein localises to the cytoplasm. The enzyme catalyses A + NH4(+) + H2O = hydroxylamine + AH2 + H(+). In terms of biological role, catalyzes the reduction of hydroxylamine to form NH(3) and H(2)O. The protein is Hydroxylamine reductase of Escherichia coli O17:K52:H18 (strain UMN026 / ExPEC).